The chain runs to 567 residues: Multidrug transporter TPO1_1 (567 aa).

Residues 1 to 71 (MVEEISPKYT…NRRMSRILTG (71 aa)) are disordered. A glycan (N-linked (GlcNAc...) asparagine) is linked at asparagine 120. The next 12 membrane-spanning stretches (helical) occupy residues 128–148 (IICI…SIFA), 157–177 (IYHV…FGFA), 194–214 (GVLV…ATSK), 224–244 (FFGG…FADM), 253–273 (AICL…VMGS), 283–303 (WLEY…ALTF), 358–378 (PLLL…YLML), 396–416 (ELPY…LWYF), 436–456 (LIPM…FCWT), 471–491 (AGSF…NYII), 498–520 (AASA…PLFA), and 531–551 (WAGL…LFFL).

Belongs to the major facilitator superfamily. DHA1 family. Polyamines/proton antiporter (TC 2.A.1.2.16) subfamily.

The protein localises to the cell membrane. Functionally, multidrug resistance transporter involved in resistance to azole antifungal drugs such as the imidazoles miconazole, ketoconazole, and tioconazole; as well as the triazoles itraconazole and fluconazole. Also plays a role in the resistance to other antifungal drug families such as the polyene amphotericin B, the pyrimide analog flucytosine, the fungicide mancozeb, and the polyamine spermine. Decreases the intracellular accumulation of clotrimazole by mediating its extrusion from cells. Involved in virulence by conferring resistance to the human antimicrobial peptide histatin-5. The polypeptide is Multidrug transporter TPO1_1 (Candida glabrata (strain ATCC 2001 / BCRC 20586 / JCM 3761 / NBRC 0622 / NRRL Y-65 / CBS 138) (Yeast)).